Consider the following 257-residue polypeptide: Metallo-beta-lactamase type 2 (257 aa).

The N-terminal stretch at 1 to 30 (MKKNTLLKVGLCVSLLGTTQFVSTISSVQA) is a signal peptide. Zn(2+)-binding residues include histidine 116, histidine 118, aspartate 120, histidine 179, and cysteine 198. Substrate-binding residues include lysine 201 and asparagine 210. Histidine 240 provides a ligand contact to Zn(2+).

The protein belongs to the metallo-beta-lactamase superfamily. Class-B beta-lactamase family. Monomer. Requires Zn(2+) as cofactor.

It is found in the periplasm. It catalyses the reaction a beta-lactam + H2O = a substituted beta-amino acid. Confers resistance to the different beta-lactams antibiotics (penicillin, cephalosporin and carbapenem) via the hydrolysis of the beta-lactam ring. This Bacillus sp. (strain 170) protein is Metallo-beta-lactamase type 2.